Consider the following 79-residue polypeptide: Sulfur carrier protein TusA (79 aa).

Residue C17 is the Cysteine persulfide intermediate of the active site.

It belongs to the sulfur carrier protein TusA family.

The protein resides in the cytoplasm. Functionally, sulfur carrier protein which probably makes part of a sulfur-relay system. This Haemophilus influenzae (strain PittEE) protein is Sulfur carrier protein TusA.